The sequence spans 115 residues: Large ribosomal subunit protein bL20c (115 aa).

Belongs to the bacterial ribosomal protein bL20 family.

The protein localises to the plastid. It localises to the chloroplast. Binds directly to 23S ribosomal RNA and is necessary for the in vitro assembly process of the 50S ribosomal subunit. It is not involved in the protein synthesizing functions of that subunit. The sequence is that of Large ribosomal subunit protein bL20c from Cycas taitungensis (Prince sago).